Consider the following 334-residue polypeptide: Phosphoribosylformylglycinamidine cyclo-ligase (334 aa).

The protein belongs to the AIR synthase family.

It localises to the cytoplasm. It catalyses the reaction 2-formamido-N(1)-(5-O-phospho-beta-D-ribosyl)acetamidine + ATP = 5-amino-1-(5-phospho-beta-D-ribosyl)imidazole + ADP + phosphate + H(+). Its pathway is purine metabolism; IMP biosynthesis via de novo pathway; 5-amino-1-(5-phospho-D-ribosyl)imidazole from N(2)-formyl-N(1)-(5-phospho-D-ribosyl)glycinamide: step 2/2. The protein is Phosphoribosylformylglycinamidine cyclo-ligase of Thermococcus gammatolerans (strain DSM 15229 / JCM 11827 / EJ3).